Consider the following 245-residue polypeptide: Myelin protein P0 (245 aa).

Positions 1-28 are cleaved as a signal peptide; the sequence is MEPSGLRTPCSLLALVLLSALVLTPTLA. The Ig-like V-type domain occupies 29-143; it reads IEVYTDREVY…VGKSSYVHLQ (115 aa). At 29–153 the chain is on the extracellular side; sequence IEVYTDREVY…VQEKGPARAG (125 aa). Cys49 and Cys125 are oxidised to a cystine. N-linked (GlcNAc...) asparagine glycosylation occurs at Asn120. Residues 154-174 traverse the membrane as a helical segment; sequence LILGIIIAVALALVIVVTILI. At 175–245 the chain is on the cytoplasmic side; it reads LLIRYCWLRR…GIGDSRKDRK (71 aa). Composition is skewed to basic and acidic residues over residues 199-208 and 224-245; these read KLHKAKDSSK and TRGK…KDRK. The segment at 199–245 is disordered; sequence KLHKAKDSSKRSSRQTPILYAMLDQTRGKSSEKKAKGGIGDSRKDRK.

It belongs to the myelin P0 protein family.

The protein resides in the cell membrane. Its function is as follows. Creation of an extracellular membrane face which guides the wrapping process and ultimately compacts adjacent lamellae. In Xenopus laevis (African clawed frog), this protein is Myelin protein P0 (mpz).